The sequence spans 868 residues: MADVSIEKLASDIGTTVDRLVGQFKDAGISKSAGEQVNEDEKQKLLDHLSKQHGSAAEPTRMTLKRKTTSTLSVGKSKEVKVEVRKKRTYVKRSDIEEQQRQAEEEAKRLEEEARLKREAEEKAAAEAKKAAEEKARKAQEAKKAAEEERVRRAEQAKKEAEARKKDEPELTEAEKAEAEAARQEEERLRKAQEEEAQKKLEEDAKKAADEARKLAEENERRWKEEEERRKKAEAEEVHLHSNRYAQEAEDEEDMQVERSSRRRRKSKKNAGEHLKQGFNKPAAPVERVVKLGATITVGELASKLAIKSNEVIKTMMKMGEMATINQVLDQDTAVLVIEEMGHKYELVNDNALEDELLADGTDGEKTSRAPVVTIMGHVDHGKTSLLDYIRRAKVADGEAGGITQHIGAYKVQTDNGEITFLDTPGHAAFTAMRARGATATDIVILVVAADDGVMPQTKEAVQHARAAGVPLIVAVNKMDKETADPDRVKTELSQLEVISEEWGGEHQFCNVSAKTGMGVDELLEAIVLQSELLDLQAVAEGPGRGIVIESRLDKGRGPVASVLVQEGQLRAGDILLCGEEYGRVRAMRDENGKDMKLAGPSTPVEVLGLSGVPVAGEDAAVVKDERKAREVAAKRHQKKRELKLARQQKAKLENMFANMESGDVSELNIVLKADVQGSVEAISESLIKLSTSEVKVNIVGSGVGGITETDATLAAASGAIVLGFNVRADATARRVLEAEEIDLRYYSVIYNLIDEVKAAMSGMLAPEFKQEIIGLAEVRDVFKSPKLGAIAGCMVTEGNVKRSNPIRVLRDNVVIYEGELESLRRFKDDVQDVRNGMECGIGVKNYNDVKVGDQIEVFEIVEVKREI.

Disordered stretches follow at residues 49–72 and 92–276; these read LSKQHGSAAEPTRMTLKRKTTSTL and KRSD…EHLK. Basic and acidic residues predominate over residues 92–240; that stretch reads KRSDIEEQQR…KKAEAEEVHL (149 aa). The region spanning 368-537 is the tr-type G domain; sequence SRAPVVTIMG…VLQSELLDLQ (170 aa). Residues 377-384 are G1; sequence GHVDHGKT. 377-384 provides a ligand contact to GTP; it reads GHVDHGKT. Positions 402–406 are G2; it reads GITQH. The G3 stretch occupies residues 423–426; the sequence is DTPG. Residues 423-427 and 477-480 contribute to the GTP site; these read DTPGH and NKMD. The tract at residues 477-480 is G4; that stretch reads NKMD. The tract at residues 513–515 is G5; it reads SAK.

The protein belongs to the TRAFAC class translation factor GTPase superfamily. Classic translation factor GTPase family. IF-2 subfamily.

Its subcellular location is the cytoplasm. In terms of biological role, one of the essential components for the initiation of protein synthesis. Protects formylmethionyl-tRNA from spontaneous hydrolysis and promotes its binding to the 30S ribosomal subunits. Also involved in the hydrolysis of GTP during the formation of the 70S ribosomal complex. The polypeptide is Translation initiation factor IF-2 (Alteromonas mediterranea (strain DSM 17117 / CIP 110805 / LMG 28347 / Deep ecotype)).